Reading from the N-terminus, the 485-residue chain is Signal recognition particle protein (485 aa).

GTP is bound by residues 107–114, 189–193, and 247–250; these read GLQGAGKT, DTAGR, and TKLD. The tract at residues 452-485 is disordered; sequence GFGGGAPAPQPGFRGYGPPKKQKKGSKKKKGFGL. A compositionally biased stretch (basic residues) spans 471 to 485; it reads KKQKKGSKKKKGFGL.

Belongs to the GTP-binding SRP family. SRP54 subfamily. Part of the signal recognition particle protein translocation system, which is composed of SRP and FtsY.

It localises to the cytoplasm. The enzyme catalyses GTP + H2O = GDP + phosphate + H(+). Functionally, involved in targeting and insertion of nascent membrane proteins into the cytoplasmic membrane. Binds to the hydrophobic signal sequence of the ribosome-nascent chain (RNC) as it emerges from the ribosomes. The SRP-RNC complex is then targeted to the cytoplasmic membrane where it interacts with the SRP receptor FtsY. The polypeptide is Signal recognition particle protein (Synechococcus elongatus (strain ATCC 33912 / PCC 7942 / FACHB-805) (Anacystis nidulans R2)).